The primary structure comprises 651 residues: Acetyl-coenzyme A synthetase (651 aa).

Residues 189–192 (RGGK), T311, and N335 each bind CoA. ATP-binding positions include 387-389 (GEP), 411-416 (DTWWQT), D500, and R515. S523 provides a ligand contact to CoA. R526 is a binding site for ATP. 3 residues coordinate Mg(2+): V537, H539, and V542. A CoA-binding site is contributed by R586. K611 is modified (N6-acetyllysine).

This sequence belongs to the ATP-dependent AMP-binding enzyme family. The cofactor is Mg(2+). Post-translationally, acetylated. Deacetylation by the SIR2-homolog deacetylase activates the enzyme.

It catalyses the reaction acetate + ATP + CoA = acetyl-CoA + AMP + diphosphate. Its function is as follows. Catalyzes the conversion of acetate into acetyl-CoA (AcCoA), an essential intermediate at the junction of anabolic and catabolic pathways. AcsA undergoes a two-step reaction. In the first half reaction, AcsA combines acetate with ATP to form acetyl-adenylate (AcAMP) intermediate. In the second half reaction, it can then transfer the acetyl group from AcAMP to the sulfhydryl group of CoA, forming the product AcCoA. This is Acetyl-coenzyme A synthetase from Brucella abortus (strain S19).